The chain runs to 186 residues: Large ribosomal subunit protein uL6 (186 aa).

It belongs to the universal ribosomal protein uL6 family. As to quaternary structure, part of the 50S ribosomal subunit.

Its function is as follows. This protein binds to the 23S rRNA, and is important in its secondary structure. It is located near the subunit interface in the base of the L7/L12 stalk, and near the tRNA binding site of the peptidyltransferase center. This Hyperthermus butylicus (strain DSM 5456 / JCM 9403 / PLM1-5) protein is Large ribosomal subunit protein uL6.